Here is a 70-residue protein sequence, read N- to C-terminus: Large ribosomal subunit protein bL31 (70 aa).

Zn(2+) contacts are provided by cysteine 16, cysteine 18, cysteine 36, and cysteine 39.

It belongs to the bacterial ribosomal protein bL31 family. Type A subfamily. Part of the 50S ribosomal subunit. Requires Zn(2+) as cofactor.

Binds the 23S rRNA. The chain is Large ribosomal subunit protein bL31 from Fervidobacterium nodosum (strain ATCC 35602 / DSM 5306 / Rt17-B1).